The following is a 101-amino-acid chain: Small ribosomal subunit protein uS14 (101 aa).

This sequence belongs to the universal ribosomal protein uS14 family. Part of the 30S ribosomal subunit. Contacts proteins S3 and S10.

Functionally, binds 16S rRNA, required for the assembly of 30S particles and may also be responsible for determining the conformation of the 16S rRNA at the A site. This is Small ribosomal subunit protein uS14 from Hydrogenovibrio crunogenus (strain DSM 25203 / XCL-2) (Thiomicrospira crunogena).